A 476-amino-acid chain; its full sequence is Glycogen synthase (476 aa).

Lysine 15 is a binding site for ADP-alpha-D-glucose.

Belongs to the glycosyltransferase 1 family. Bacterial/plant glycogen synthase subfamily.

It carries out the reaction [(1-&gt;4)-alpha-D-glucosyl](n) + ADP-alpha-D-glucose = [(1-&gt;4)-alpha-D-glucosyl](n+1) + ADP + H(+). Its pathway is glycan biosynthesis; glycogen biosynthesis. Functionally, synthesizes alpha-1,4-glucan chains using ADP-glucose. The protein is Glycogen synthase of Streptococcus equi subsp. zooepidemicus (strain H70).